Consider the following 157-residue polypeptide: Ribonuclease 8 (157 aa).

A signal peptide spans 1–30 (MAPARAGCCPLLLLLLLLLGLWVAEVLVSA). The Proton acceptor role is filled by H45. Cystine bridges form between C53–C96, C67–C121, C85–C136, and C92–C99. Residues 68 to 72 (KDLNT) and K93 contribute to the substrate site. The active-site Proton donor is H152.

It belongs to the pancreatic ribonuclease family.

It is found in the secreted. Functionally, has a low ribonuclease activity. This Pan troglodytes (Chimpanzee) protein is Ribonuclease 8 (RNASE8).